The chain runs to 326 residues: 4-hydroxythreonine-4-phosphate dehydrogenase (326 aa).

Substrate is bound by residues histidine 134 and threonine 135. Positions 164, 209, and 264 each coordinate a divalent metal cation. Residues lysine 272, asparagine 281, and arginine 290 each contribute to the substrate site.

Belongs to the PdxA family. In terms of assembly, homodimer. The cofactor is Zn(2+). Requires Mg(2+) as cofactor. Co(2+) serves as cofactor.

The protein localises to the cytoplasm. The catalysed reaction is 4-(phosphooxy)-L-threonine + NAD(+) = 3-amino-2-oxopropyl phosphate + CO2 + NADH. It participates in cofactor biosynthesis; pyridoxine 5'-phosphate biosynthesis; pyridoxine 5'-phosphate from D-erythrose 4-phosphate: step 4/5. In terms of biological role, catalyzes the NAD(P)-dependent oxidation of 4-(phosphooxy)-L-threonine (HTP) into 2-amino-3-oxo-4-(phosphooxy)butyric acid which spontaneously decarboxylates to form 3-amino-2-oxopropyl phosphate (AHAP). This is 4-hydroxythreonine-4-phosphate dehydrogenase from Colwellia psychrerythraea (strain 34H / ATCC BAA-681) (Vibrio psychroerythus).